The chain runs to 668 residues: tRNA 5-methylaminomethyl-2-thiouridine biosynthesis bifunctional protein MnmC (668 aa).

The tRNA (mnm(5)s(2)U34)-methyltransferase stretch occupies residues 1 to 245; sequence MKHYSIQPAN…KREMLCGVME (245 aa). The tract at residues 270–668 is FAD-dependent cmnm(5)s(2)U34 oxidoreductase; the sequence is IGGGIASALL…LLKGKAVKAG (399 aa).

The protein in the N-terminal section; belongs to the methyltransferase superfamily. tRNA (mnm(5)s(2)U34)-methyltransferase family. It in the C-terminal section; belongs to the DAO family. Requires FAD as cofactor.

The protein resides in the cytoplasm. The enzyme catalyses 5-aminomethyl-2-thiouridine(34) in tRNA + S-adenosyl-L-methionine = 5-methylaminomethyl-2-thiouridine(34) in tRNA + S-adenosyl-L-homocysteine + H(+). Functionally, catalyzes the last two steps in the biosynthesis of 5-methylaminomethyl-2-thiouridine (mnm(5)s(2)U) at the wobble position (U34) in tRNA. Catalyzes the FAD-dependent demodification of cmnm(5)s(2)U34 to nm(5)s(2)U34, followed by the transfer of a methyl group from S-adenosyl-L-methionine to nm(5)s(2)U34, to form mnm(5)s(2)U34. The protein is tRNA 5-methylaminomethyl-2-thiouridine biosynthesis bifunctional protein MnmC of Escherichia coli O9:H4 (strain HS).